The sequence spans 191 residues: Transcriptional activator GvpE1 (191 aa).

The segment at 31-51 (SDGASDHADQPPDEGATQRYT) is disordered. 140-145 (KRKVYR) is a binding site for DNA. The interval 150 to 181 (EGAFTRIDHMVDQLLLFSLVLKAVMTDCKARQ) is leucine-zipper.

Interacts with GvpD.

The protein resides in the cytoplasm. Its activity is regulated as follows. The amount of protein that accumulates is controlled by GvpD; GvpD causes a reduction in the amount of GvpE, preventing accumulation of excessive amounts of gas vesicles. Plays a regulatory role in gas vesicle synthesis, activates transcription of the gvpA operon, and probably of the gvpD operon. Gas vesicles are hollow, gas filled proteinaceous nanostructures found in several microbial planktonic microorganisms. They allow positioning of halobacteria at the optimal depth for growth in the poorly aerated, shallow brine pools of their habitat. Its function is as follows. Expression of a 9.5 kb p-vac DNA fragment containing 2 divergently transcribed regions (gvpD-gvpE-gvpF-gvpG-gvpH-gvpI-gvpJ-gvpK-gvpL-gvpM and gvpA-gvpC-gvpN-gvpO) allows H.volcanii to produce gas vesicles. A similar region restores gas vesicle production in H.halobium without the p-vac locus, but it still has the c-vac locus. This is Transcriptional activator GvpE1 (gvpE11) from Halobacterium salinarum (strain ATCC 700922 / JCM 11081 / NRC-1) (Halobacterium halobium).